Consider the following 1295-residue polypeptide: DNA-directed RNA polymerase subunit beta' (1295 aa).

Cys-60, Cys-62, Cys-75, and Cys-78 together coordinate Zn(2+). 3 residues coordinate Mg(2+): Asp-516, Asp-518, and Asp-520. Zn(2+)-binding residues include Cys-841, Cys-914, Cys-921, and Cys-924.

It belongs to the RNA polymerase beta' chain family. The RNAP catalytic core consists of 2 alpha, 1 beta, 1 beta' and 1 omega subunit. When a sigma factor is associated with the core the holoenzyme is formed, which can initiate transcription. Mg(2+) serves as cofactor. Zn(2+) is required as a cofactor.

The enzyme catalyses RNA(n) + a ribonucleoside 5'-triphosphate = RNA(n+1) + diphosphate. DNA-dependent RNA polymerase catalyzes the transcription of DNA into RNA using the four ribonucleoside triphosphates as substrates. The chain is DNA-directed RNA polymerase subunit beta' from Dehalococcoides mccartyi (strain CBDB1).